The sequence spans 156 residues: Small ribosomal subunit protein uS7 (156 aa).

This sequence belongs to the universal ribosomal protein uS7 family. In terms of assembly, part of the 30S ribosomal subunit. Contacts proteins S9 and S11.

Functionally, one of the primary rRNA binding proteins, it binds directly to 16S rRNA where it nucleates assembly of the head domain of the 30S subunit. Is located at the subunit interface close to the decoding center, probably blocks exit of the E-site tRNA. This chain is Small ribosomal subunit protein uS7, found in Desulfitobacterium hafniense (strain DSM 10664 / DCB-2).